The chain runs to 433 residues: Glutamyl-tRNA reductase (433 aa).

Residues 49-52 (TCNR), S114, 119-121 (EPQ), and Q125 contribute to the substrate site. The active-site Nucleophile is C50. An NADP(+)-binding site is contributed by 201-206 (GAGETI).

Belongs to the glutamyl-tRNA reductase family. In terms of assembly, homodimer.

The enzyme catalyses (S)-4-amino-5-oxopentanoate + tRNA(Glu) + NADP(+) = L-glutamyl-tRNA(Glu) + NADPH + H(+). The protein operates within porphyrin-containing compound metabolism; protoporphyrin-IX biosynthesis; 5-aminolevulinate from L-glutamyl-tRNA(Glu): step 1/2. In terms of biological role, catalyzes the NADPH-dependent reduction of glutamyl-tRNA(Glu) to glutamate 1-semialdehyde (GSA). This Histophilus somni (strain 2336) (Haemophilus somnus) protein is Glutamyl-tRNA reductase.